The chain runs to 266 residues: UPF0294 protein YafD (266 aa).

This sequence belongs to the UPF0294 family.

It localises to the cytoplasm. This Salmonella agona (strain SL483) protein is UPF0294 protein YafD.